We begin with the raw amino-acid sequence, 386 residues long: Synaptotagmin-5 (386 aa).

Positions 1-16 (MFPEPPTPGSPAPETP) are enriched in pro residues. Residues 1–21 (MFPEPPTPGSPAPETPPDSSR) form a disordered region. Residues 1 to 24 (MFPEPPTPGSPAPETPPDSSRIRQ) are Vesicular-facing. A helical transmembrane segment spans residues 25-45 (GAVPAWVLATILLGSGLLVFS). At 46 to 386 (SCFCLYRKRC…PDRARPIPAP (341 aa)) the chain is on the cytoplasmic side. C2 domains are found at residues 108-227 (QLGR…QAWR) and 239-372 (KLGD…AQWH). Ca(2+) contacts are provided by Leu-138, Asp-139, Asp-145, Asp-197, Phe-198, Asp-199, Ser-202, Asp-205, Asp-270, Asp-276, Asp-330, and Asp-332.

The protein belongs to the synaptotagmin family. As to quaternary structure, homodimer. Interacts with both alpha- and beta-tubulin. The cofactor is Ca(2+). Expressed in kidney, adipose tissue, lung and heart, as well as at higher levels in brain.

It is found in the cytoplasmic vesicle. Its subcellular location is the secretory vesicle. The protein localises to the synaptic vesicle membrane. The protein resides in the recycling endosome membrane. Functionally, may be involved in Ca(2+)-dependent exocytosis of secretory vesicles through Ca(2+) and phospholipid binding to the C2 domain or may serve as Ca(2+) sensors in the process of vesicular trafficking and exocytosis. Regulates the Ca(2+)-dependent secretion of norepinephrine in PC12 cells. Required for export from the endocytic recycling compartment to the cell surface. This chain is Synaptotagmin-5 (Syt5), found in Rattus norvegicus (Rat).